A 420-amino-acid chain; its full sequence is DNA repair protein RadA (420 aa).

Residue 62-69 participates in ATP binding; that stretch reads GDPGIGKS. The short motif at 218–222 is the RadA KNRFG motif element; it reads KNRFG. Positions 317 to 420 are lon-protease-like; sequence DAYLKSAGGV…IQEVLKKVFA (104 aa).

This sequence belongs to the RecA family. RadA subfamily.

Plays a role in repairing double-strand DNA breaks, probably involving stabilizing or processing branched DNA or blocked replication forks. Required for efficient transformation with chromosomal (linear) DNA, but not for replicative plasmid DNA. Its increased sensitivity to a DNA damaging agent suggests it may be required for DNA repair. The protein is DNA repair protein RadA of Streptococcus pneumoniae (strain ATCC BAA-255 / R6).